We begin with the raw amino-acid sequence, 82 residues long: UPF0437 protein in nifX-nifW intergenic region (82 aa).

This sequence belongs to the UPF0437 family.

In Frankia alni, this protein is UPF0437 protein in nifX-nifW intergenic region.